A 404-amino-acid polypeptide reads, in one-letter code: Aspartokinase 1 (404 aa).

Position 7–10 (7–10) interacts with ATP; the sequence is KFGG. Substrate is bound at residue 25–30; sequence HIKEAI. Serine 41 is an ATP binding site. Substrate is bound by residues 52-54, glutamate 79, 130-131, 155-158, and serine 158; these read TDS, LA, and RGGS. ATP contacts are provided by residues 178-179 and 184-189; these read TD and MTADPR. Substrate is bound by residues 299-301, 355-356, 369-370, and 376-377; these read SVD, VT, PI, and SH. The 61-residue stretch at 344–404 folds into the ACT domain; that stretch reads AVGAGIMGVP…ALHEVFELSK (61 aa).

Belongs to the aspartokinase family. Tetramer consisting of 2 isoforms Alpha (catalytic) and 2 isoforms Beta (function not known).

The enzyme catalyses L-aspartate + ATP = 4-phospho-L-aspartate + ADP. The protein operates within amino-acid biosynthesis; L-lysine biosynthesis via DAP pathway; (S)-tetrahydrodipicolinate from L-aspartate: step 1/4. Its pathway is amino-acid biosynthesis; L-methionine biosynthesis via de novo pathway; L-homoserine from L-aspartate: step 1/3. It participates in amino-acid biosynthesis; L-threonine biosynthesis; L-threonine from L-aspartate: step 1/5. With respect to regulation, diaminopimelate-sensitive. In terms of biological role, catalyzes the phosphorylation of the beta-carboxyl group of aspartic acid with ATP to yield 4-phospho-L-aspartate, which is involved in the branched biosynthetic pathway leading to the biosynthesis of amino acids threonine, isoleucine and methionine. The sequence is that of Aspartokinase 1 (dapG) from Bacillus subtilis (strain 168).